Here is a 151-residue protein sequence, read N- to C-terminus: MQQSVIEVQQAPFDQHAIYQWLSEPHSVGATTIFVGKVREMNLGDNVSGLYLEHYPAMTKKALQEIVNQARQRWELQRIAVIHRIGQLHTGDEIVLVGVSSAHRGDAYLANEFIMDYLKTKAPFWKRETTAEGERWIESRESDEQQLEKWR.

Residues 37 to 39 (KVR), 103 to 104 (HR), Lys-119, and 126 to 128 (KRE) each bind substrate.

Belongs to the MoaE family. As to quaternary structure, heterotetramer of 2 MoaD subunits and 2 MoaE subunits. Also stable as homodimer. The enzyme changes between these two forms during catalysis.

The enzyme catalyses 2 [molybdopterin-synthase sulfur-carrier protein]-C-terminal-Gly-aminoethanethioate + cyclic pyranopterin phosphate + H2O = molybdopterin + 2 [molybdopterin-synthase sulfur-carrier protein]-C-terminal Gly-Gly + 2 H(+). It participates in cofactor biosynthesis; molybdopterin biosynthesis. Functionally, converts molybdopterin precursor Z into molybdopterin. This requires the incorporation of two sulfur atoms into precursor Z to generate a dithiolene group. The sulfur is provided by MoaD. This Haemophilus ducreyi (strain 35000HP / ATCC 700724) protein is Molybdopterin synthase catalytic subunit (moaE).